The primary structure comprises 571 residues: MQRAAMYEEGPPPSYESVVSAAPVAAALGSPFDAPLDPPFVPPRYLRPTGGRNSIRYSELAPLFDTTRVYLVDNKSTDVASLNYQNDHSNFLTTVIQNNDYSPGEASTQTINLDDRSHWGGDLKTILHTNMPNVNEFMFTNKFKARVMVSRSLTKDKQVELKYEWVEFTLPEGNYSETMTIDLMNNAIVEHYLKVGRQNGVLESDIGVKFDTRNFRLGFDPVTGLVMPGVYTNEAFHPDIILLPGCGVDFTHSRLSNLLGIRKRQPFQEGFRITYDDLEGGNIPALLDVDAYQASLKDDTEQGGDGAGGGNNSGSGAEENSNAAAAAMQPVEDMNDHAIRGDTFATRAEEKRAEAEAAAEAAAPAAQPEVEKPQKKPVIKPLTEDSKKRSYNLISNDSTFTQYRSWYLAYNYGDPQTGIRSWTLLCTPDVTCGSEQVYWSLPDMMQDPVTFRSTSQISNFPVVGAELLPVHSKSFYNDQAVYSQLIRQFTSLTHVFNRFPENQILARPPAPTITTVSENVPALTDHGTLPLRNSIGGVQRVTITDARRRTCPYVYKALGIVSPRVLSSRTF.

Residues 298–324 are disordered; the sequence is DDTEQGGDGAGGGNNSGSGAEENSNAA. Over residues 303–313 the composition is skewed to gly residues; that stretch reads GGDGAGGGNNS. A compositionally biased stretch (low complexity) spans 314–324; it reads GSGAEENSNAA. Positions 340–342 match the Cell attachment site motif; that stretch reads RGD. Residues 347-383 form a disordered region; it reads RAEEKRAEAEAAAEAAAPAAQPEVEKPQKKPVIKPLT. Positions 356-368 are enriched in low complexity; it reads EAAAEAAAPAAQP. Phosphoserine; by host is present on serine 455.

The protein belongs to the adenoviridae penton family. As to quaternary structure, interacts with the fiber protein (via N-terminal tail region). Interacts with the capsid vertex protein; this interaction binds the penton base to neighboring peripentonal hexons. Interacts (via the cell attachment site RGD) with host heterodimer ITGAV-ITGB5; this interaction promotes virus internalization. Interacts with host WWP1 and WWP2.

It localises to the virion. The protein resides in the host nucleus. Its function is as follows. Major capsid protein that self-associates to form penton base pentamers, each in the shape of a pentagon, situated at the 12 vertices of the pseudo T=25 capsid. Involved in virus secondary attachment to host cell after initial attachment by the fiber protein. Binds host integrin heterodimer ITGAV-ITGB5 (alphaV-beta5) thereby triggering clathrin-mediated endocytosis of virions. Mediates initial virus attachment to CXADR-negative cells. Binding to integrins ITGAV-ITGB5 also seems to induce macropinocytosis uptake of the virus. As the virus enters the host cell, penton proteins are shed concomitant with virion acidification in the endosome. This chain is Penton protein, found in Homo sapiens (Human).